The primary structure comprises 178 residues: Interleukin-10 (178 aa).

The first 18 residues, 1–18 (MHSSALLCCLVLLTGVRA), serve as a signal peptide directing secretion. Disulfide bonds link Cys30-Cys126 and Cys80-Cys132. N-linked (GlcNAc...) asparagine glycosylation is present at Asn134.

This sequence belongs to the IL-10 family. As to quaternary structure, homodimer. Interacts with IL10RA and IL10RB.

Its subcellular location is the secreted. Major immune regulatory cytokine that acts on many cells of the immune system where it has profound anti-inflammatory functions, limiting excessive tissue disruption caused by inflammation. Mechanistically, IL10 binds to its heterotetrameric receptor comprising IL10RA and IL10RB leading to JAK1 and STAT2-mediated phosphorylation of STAT3. In turn, STAT3 translocates to the nucleus where it drives expression of anti-inflammatory mediators. Targets antigen-presenting cells (APCs) such as macrophages and monocytes and inhibits their release of pro-inflammatory cytokines including granulocyte-macrophage colony-stimulating factor /GM-CSF, granulocyte colony-stimulating factor/G-CSF, IL-1 alpha, IL-1 beta, IL-6, IL-8 and TNF-alpha. Also interferes with antigen presentation by reducing the expression of MHC-class II and co-stimulatory molecules, thereby inhibiting their ability to induce T cell activation. In addition, controls the inflammatory response of macrophages by reprogramming essential metabolic pathways including mTOR signaling. The polypeptide is Interleukin-10 (IL10) (Pan troglodytes (Chimpanzee)).